We begin with the raw amino-acid sequence, 56 residues long: Preprotein translocase subunit SecG (56 aa).

Residues 1–29 (MAKDKTTLPPTGAGLMRFFDEDTRAIKVS) are Cytoplasmic-facing. Residues 30–51 (PKGVIAIVLVLIAFEVFLHLFG) form a helical membrane-spanning segment. Residues 52 to 56 (PSIFG) are Extracellular-facing.

This sequence belongs to the SEC61-beta family. In terms of assembly, component of the protein translocase complex. Heterotrimer consisting of alpha (SecY), beta (SecG) and gamma (SecE) subunits. Can form oligomers of the heterotrimer.

It localises to the cell membrane. In terms of biological role, involved in protein export. The function of the beta subunit is unknown, but it may be involved in stabilization of the trimeric complex. The protein is Preprotein translocase subunit SecG of Thermococcus gammatolerans (strain DSM 15229 / JCM 11827 / EJ3).